Reading from the N-terminus, the 261-residue chain is Imidazole glycerol phosphate synthase subunit HisF (261 aa).

Active-site residues include Asp12 and Asp131.

The protein belongs to the HisA/HisF family. In terms of assembly, heterodimer of HisH and HisF.

It is found in the cytoplasm. It catalyses the reaction 5-[(5-phospho-1-deoxy-D-ribulos-1-ylimino)methylamino]-1-(5-phospho-beta-D-ribosyl)imidazole-4-carboxamide + L-glutamine = D-erythro-1-(imidazol-4-yl)glycerol 3-phosphate + 5-amino-1-(5-phospho-beta-D-ribosyl)imidazole-4-carboxamide + L-glutamate + H(+). It functions in the pathway amino-acid biosynthesis; L-histidine biosynthesis; L-histidine from 5-phospho-alpha-D-ribose 1-diphosphate: step 5/9. Functionally, IGPS catalyzes the conversion of PRFAR and glutamine to IGP, AICAR and glutamate. The HisF subunit catalyzes the cyclization activity that produces IGP and AICAR from PRFAR using the ammonia provided by the HisH subunit. This Brucella melitensis biotype 2 (strain ATCC 23457) protein is Imidazole glycerol phosphate synthase subunit HisF.